The following is a 354-amino-acid chain: Phenylalanine 4-monooxygenase, chloroplastic (354 aa).

The N-terminal 60 residues, methionine 1–arginine 60, are a transit peptide targeting the chloroplast. Histidine 229, histidine 234, and glutamate 274 together coordinate Fe cation.

The protein belongs to the biopterin-dependent aromatic amino acid hydroxylase family. As to quaternary structure, forms monomers. It depends on Fe(2+) as a cofactor.

It is found in the plastid. The protein localises to the chloroplast. It catalyses the reaction (6R)-L-erythro-5,6,7,8-tetrahydrobiopterin + L-phenylalanine + O2 = (4aS,6R)-4a-hydroxy-L-erythro-5,6,7,8-tetrahydrobiopterin + L-tyrosine. Catalyzes the hydroxylation of L-phenylalanine to L-tyrosine. Does not seem to be tetrahydropterin-dependent and shows preference for 10-formyltetrahydrofolate as cosubstrate and electron donor. The chain is Phenylalanine 4-monooxygenase, chloroplastic from Pinus taeda (Loblolly pine).